We begin with the raw amino-acid sequence, 860 residues long: Alanine--tRNA ligase (860 aa).

Residues H553, H557, C655, and H659 each contribute to the Zn(2+) site.

It belongs to the class-II aminoacyl-tRNA synthetase family. Zn(2+) is required as a cofactor.

The protein resides in the cytoplasm. It catalyses the reaction tRNA(Ala) + L-alanine + ATP = L-alanyl-tRNA(Ala) + AMP + diphosphate. In terms of biological role, catalyzes the attachment of alanine to tRNA(Ala) in a two-step reaction: alanine is first activated by ATP to form Ala-AMP and then transferred to the acceptor end of tRNA(Ala). Also edits incorrectly charged Ser-tRNA(Ala) and Gly-tRNA(Ala) via its editing domain. The chain is Alanine--tRNA ligase from Legionella pneumophila (strain Lens).